Consider the following 136-residue polypeptide: Protein NrdI (136 aa).

It belongs to the NrdI family.

Probably involved in ribonucleotide reductase function. The protein is Protein NrdI of Enterobacter sp. (strain 638).